Consider the following 233-residue polypeptide: uncharacterized protein (233 aa).

Disordered stretches follow at residues 1 to 159 and 181 to 206; these read MGKH…NEKL and MGVKNAPKPTDDSSRLSDEKNRQDKM. A compositionally biased stretch (basic and acidic residues) spans 36–115; that stretch reads RDRSRSPHKE…RRDDKNRLSA (80 aa). Residues 135–148 show a composition bias toward low complexity; sequence SSSSNTTDTASSSS. The span at 189 to 206 shows a compositional bias: basic and acidic residues; the sequence is PTDDSSRLSDEKNRQDKM.

This is an uncharacterized protein from Caenorhabditis elegans.